The following is a 173-amino-acid chain: uncharacterized protein (173 aa).

Belongs to the M.jannaschii MJ0150/MJ0739/MJ0745/MJ1460/MJ1642 family.

This is an uncharacterized protein from Methanocaldococcus jannaschii (strain ATCC 43067 / DSM 2661 / JAL-1 / JCM 10045 / NBRC 100440) (Methanococcus jannaschii).